The primary structure comprises 166 residues: Cyclin-dependent kinase 4 inhibitor D (166 aa).

An N-acetylmethionine modification is found at Met1. 4 ANK repeats span residues 41 to 69, 73 to 102, 106 to 135, and 138 to 166; these read FGKTALQVMMFGSPTIALELLKQGASPNV, SGTTPAHDAARTGFLDTLKVLVEHGADVNA, TGALPIHLAVREGHTSVVSFLATESDLHHR, and TGLTPLELARGRGAQELMDILQRHTVAPL.

This sequence belongs to the CDKN2 cyclin-dependent kinase inhibitor family. In terms of assembly, interacts with CDK6.

The protein localises to the nucleus. It is found in the cytoplasm. Functionally, interacts strongly with CDK4 and CDK6 and inhibits them. This Bos taurus (Bovine) protein is Cyclin-dependent kinase 4 inhibitor D (CDKN2D).